Reading from the N-terminus, the 233-residue chain is Protein YIPF6 (233 aa).

The Cytoplasmic segment spans residues 1–84 (MAETEGFGDS…PKKSTTLLRD (84 aa)). A helical membrane pass occupies residues 85–105 (WDLWGPLVLCVSLALMLQGGN). The Lumenal segment spans residues 106-111 (ADSKDD). Residues 112–132 (GGPQFAEVFVIIWFGAVVITL) traverse the membrane as a helical segment. Residues 133–142 (NSKLLGGTIS) lie on the Cytoplasmic side of the membrane. Residues 143–163 (FFQSLCVLGYCILPLTVAMLV) form a helical membrane-spanning segment. At 164-180 (CRLVLLLSHTTASFIVR) the chain is on the lumenal side. The chain crosses the membrane as a helical span at residues 181 to 201 (LVVVTVMFAWSTFASTAFLAD). The Cytoplasmic segment spans residues 202-208 (SQPPNRR). Residues 209–229 (ALAVYPIFLFYFVISWMVLTF) traverse the membrane as a helical segment. Topologically, residues 230–233 (NTVS) are lumenal.

Belongs to the YIP1 family.

The protein resides in the golgi apparatus membrane. The protein is Protein YIPF6 (yipf6) of Xenopus tropicalis (Western clawed frog).